A 185-amino-acid chain; its full sequence is Ribosome-recycling factor (185 aa).

The protein belongs to the RRF family.

Its subcellular location is the cytoplasm. In terms of biological role, responsible for the release of ribosomes from messenger RNA at the termination of protein biosynthesis. May increase the efficiency of translation by recycling ribosomes from one round of translation to another. This chain is Ribosome-recycling factor, found in Corynebacterium urealyticum (strain ATCC 43042 / DSM 7109).